Here is a 232-residue protein sequence, read N- to C-terminus: LRRN4 C-terminal-like protein (232 aa).

A signal peptide spans 1–22; sequence MPHSPCLLWLLAVTSLVPGTQP. The Extracellular segment spans residues 23–189; that stretch reads LVAGDLEGDE…RLTVPPRPLT (167 aa). The 96-residue stretch at 77–172 folds into the Fibronectin type-III domain; that stretch reads PPHPPRLGEV…GAEGLDSADG (96 aa). The N-linked (GlcNAc...) asparagine glycan is linked to N127. Residues 190–210 form a helical membrane-spanning segment; it reads LLHAAMGVGSALALLSCSALV. The Cytoplasmic portion of the chain corresponds to 211–232; the sequence is WHFCLRQRWGCPRRGRPSHAGL.

The protein localises to the membrane. In Bos taurus (Bovine), this protein is LRRN4 C-terminal-like protein (LRRN4CL).